Consider the following 943-residue polypeptide: Isoleucine--tRNA ligase (943 aa).

The short motif at 59–69 (PYANGQIHLGH) is the 'HIGH' region element. Position 577 (glutamate 577) interacts with L-isoleucyl-5'-AMP. The 'KMSKS' region motif lies at 618-622 (KMSKS). Residue lysine 621 coordinates ATP. Zn(2+) contacts are provided by cysteine 906, cysteine 909, cysteine 926, and cysteine 929.

The protein belongs to the class-I aminoacyl-tRNA synthetase family. IleS type 1 subfamily. As to quaternary structure, monomer. The cofactor is Zn(2+).

The protein resides in the cytoplasm. It catalyses the reaction tRNA(Ile) + L-isoleucine + ATP = L-isoleucyl-tRNA(Ile) + AMP + diphosphate. Its function is as follows. Catalyzes the attachment of isoleucine to tRNA(Ile). As IleRS can inadvertently accommodate and process structurally similar amino acids such as valine, to avoid such errors it has two additional distinct tRNA(Ile)-dependent editing activities. One activity is designated as 'pretransfer' editing and involves the hydrolysis of activated Val-AMP. The other activity is designated 'posttransfer' editing and involves deacylation of mischarged Val-tRNA(Ile). The chain is Isoleucine--tRNA ligase from Xylella fastidiosa (strain M23).